The following is a 93-amino-acid chain: N-myc protein (93 aa).

As to quaternary structure, efficient DNA binding requires dimerization with another bHLH protein. Binds DNA as a heterodimer with MAX. As to expression, barely detectable in most tissues assayed.

It localises to the nucleus. May function as a transcription factor. The chain is N-myc protein (mycn) from Danio rerio (Zebrafish).